The following is an 84-amino-acid chain: Small ribosomal subunit protein uS17 (84 aa).

This sequence belongs to the universal ribosomal protein uS17 family. As to quaternary structure, part of the 30S ribosomal subunit.

In terms of biological role, one of the primary rRNA binding proteins, it binds specifically to the 5'-end of 16S ribosomal RNA. The chain is Small ribosomal subunit protein uS17 from Borrelia duttonii (strain Ly).